The primary structure comprises 205 residues: Protein phosphatase inhibitor 2 family member C (205 aa).

Disordered stretches follow at residues M1 to S51 and E70 to C114. Residues K12–N17 are required for binding PPP1CC. Positions S19–G34 are enriched in low complexity. The required for binding PPP1CC stretch occupies residues K43–T55. Over residues D84–E102 the composition is skewed to basic and acidic residues. Residues H147–E150 form a required for binding PPP1CC catalytic center, displacing metal ions and inhibition of PPP1CC catalytic activity region. The disordered stretch occupies residues L165 to P205. Residues E174–A186 are compositionally biased toward basic and acidic residues.

The protein belongs to the protein phosphatase inhibitor 2 family.

Functionally, functions as a protein phosphatase inhibitor. It inhibits activity of the catalytic subunit of PP1 and weakly inhibits the activity of myosin-associated phosphates. The chain is Protein phosphatase inhibitor 2 family member C (PPP1R2C) from Macaca fascicularis (Crab-eating macaque).